A 200-amino-acid polypeptide reads, in one-letter code: Putative AgrB-like protein (200 aa).

5 helical membrane-spanning segments follow: residues 49–69 (LIITIILALLLHELVPVLVFM), 88–108 (LLCTILTAVTFVGVPYLIQFT), 114–134 (LFRFILCLLLTVPIGMFSPAV), 148–168 (ALKHKAIITSLVFSFLQFLVS), and 171–191 (LGTIIVVSLLLVFTLIVPLKG).

This sequence belongs to the AgrB family.

The protein localises to the cell membrane. Its function is as follows. May be involved in the proteolytic processing of a quorum sensing system signal molecule precursor. This is Putative AgrB-like protein from Lactiplantibacillus plantarum (strain ATCC BAA-793 / NCIMB 8826 / WCFS1) (Lactobacillus plantarum).